The following is a 424-amino-acid chain: Oleosin-B3 (424 aa).

Positions 1 to 37 (MRNEIQNETAQTDQTQGSMFSFFNLFPFLLPMFEVIK) are polar. A run of 3 helical transmembrane segments spans residues 16 to 36 (QGSM…FEVI), 38 to 58 (MVVA…TLSG), and 69 to 89 (LFII…VLAA). Residues 38–119 (MVVASVASVV…GIPESIKPSN (82 aa)) form a hydrophobic region. A run of 18 repeats spans residues 111–120 (IPESIKPSNV), 121–130 (IPESIKPSNI), 131–140 (IPESIKPSNI), 141–150 (IPVSIKPSNI), 196–202 (EDKHGKG), 203–209 (ESKHGKG), 210–216 (ESKHGKG), 217–223 (ESTHGKG), 241–258 (KHGS…GSGG), 259–276 (KHES…GSGG), 277–294 (KHES…ESVG), 301–318 (KHES…GSGG), 319–336 (KHES…GSGG), 337–354 (RHEG…GSGG), 396–400 (SSDGS), 401–405 (SSDGS), 406–410 (SSDGS), and 411–415 (SSDGS). The 4 X 10 AA tandem repeats of I-P-[EV]-S-I-K-P-S-N-[IV] stretch occupies residues 111 to 150 (IPESIKPSNVIPESIKPSNIIPESIKPSNIIPVSIKPSNI). The interval 164–424 (KIKAKQEEKS…SSHGSGGKHI (261 aa)) is disordered. Positions 167–220 (AKQEEKSKGKSEDSSKGKGKSKGEDTTTDEDKHGKGESKHGKGESKHGKGESTH) are enriched in basic and acidic residues. The interval 196 to 223 (EDKHGKGESKHGKGESKHGKGESTHGKG) is 4 X 7 AA tandem repeats of E-[SD]-[KT]-H-G-K-G. A 6 X 18 AA tandem repeats of [KR]-H-[EG]-[SG]-G-G-[SA]-[PSA]-M-G-G-G-K-H-[GE]-S-[GV]-G region spans residues 241–354 (KHGSGGSPMG…MGGGKHGSGG (114 aa)). A compositionally biased stretch (gly residues) spans 242 to 255 (HGSGGSPMGGGKHG). A compositionally biased stretch (basic and acidic residues) spans 288–304 (GKHESVGKHGSGGKHES). Positions 341–355 (GGSAMGGGKHGSGGK) are enriched in gly residues. The span at 391–416 (SSTSESSDGSSSDGSSSDGSSSDGSS) shows a compositional bias: low complexity. Residues 396 to 415 (SSDGSSSDGSSSDGSSSDGS) are 4 X 5 AA tandem repeats of S-S-D-G-S.

Belongs to the oleosin family. As to expression, the full-length protein is found in the tapetal lipid bodies of immature anthers, the proteolytically cleaved C-terminal product is found on the coats of pollen grains. No expression is detected in other flower organs, siliques or seedlings.

It localises to the lipid droplet. Its subcellular location is the membrane. Its function is as follows. Many of the major pollen coat proteins are derived from endoproteolytic cleavage of oleosin-like proteins. The polypeptide is Oleosin-B3 (Brassica napus (Rape)).